The sequence spans 197 residues: Holliday junction branch migration complex subunit RuvA (197 aa).

Positions 1–64 (MYEYIKGTYM…EDFIGLYGFG (64 aa)) are domain I. The segment at 65-143 (SKEELELFNK…VNLDEGIQTD (79 aa)) is domain II. Residues 144–149 (SNDIKV) form a flexible linker region. Residues 149–197 (VSSKILEEAKEALMSLGYSEKECEKALKNVEEKESLEIIIKESLKFLMN) are domain III.

This sequence belongs to the RuvA family. As to quaternary structure, homotetramer. Forms an RuvA(8)-RuvB(12)-Holliday junction (HJ) complex. HJ DNA is sandwiched between 2 RuvA tetramers; dsDNA enters through RuvA and exits via RuvB. An RuvB hexamer assembles on each DNA strand where it exits the tetramer. Each RuvB hexamer is contacted by two RuvA subunits (via domain III) on 2 adjacent RuvB subunits; this complex drives branch migration. In the full resolvosome a probable DNA-RuvA(4)-RuvB(12)-RuvC(2) complex forms which resolves the HJ.

It localises to the cytoplasm. Its function is as follows. The RuvA-RuvB-RuvC complex processes Holliday junction (HJ) DNA during genetic recombination and DNA repair, while the RuvA-RuvB complex plays an important role in the rescue of blocked DNA replication forks via replication fork reversal (RFR). RuvA specifically binds to HJ cruciform DNA, conferring on it an open structure. The RuvB hexamer acts as an ATP-dependent pump, pulling dsDNA into and through the RuvAB complex. HJ branch migration allows RuvC to scan DNA until it finds its consensus sequence, where it cleaves and resolves the cruciform DNA. The chain is Holliday junction branch migration complex subunit RuvA from Hathewaya histolytica (Clostridium histolyticum).